Reading from the N-terminus, the 611-residue chain is Dihydroxy-acid dehydratase (611 aa).

Asp-81 is a binding site for Mg(2+). Cys-122 contributes to the [2Fe-2S] cluster binding site. Residues Asp-123 and Lys-124 each coordinate Mg(2+). An N6-carboxylysine modification is found at Lys-124. Cys-195 is a [2Fe-2S] cluster binding site. Glu-491 provides a ligand contact to Mg(2+). Ser-517 acts as the Proton acceptor in catalysis.

Belongs to the IlvD/Edd family. Homodimer. [2Fe-2S] cluster serves as cofactor. Mg(2+) is required as a cofactor.

The catalysed reaction is (2R)-2,3-dihydroxy-3-methylbutanoate = 3-methyl-2-oxobutanoate + H2O. The enzyme catalyses (2R,3R)-2,3-dihydroxy-3-methylpentanoate = (S)-3-methyl-2-oxopentanoate + H2O. It functions in the pathway amino-acid biosynthesis; L-isoleucine biosynthesis; L-isoleucine from 2-oxobutanoate: step 3/4. It participates in amino-acid biosynthesis; L-valine biosynthesis; L-valine from pyruvate: step 3/4. In terms of biological role, functions in the biosynthesis of branched-chain amino acids. Catalyzes the dehydration of (2R,3R)-2,3-dihydroxy-3-methylpentanoate (2,3-dihydroxy-3-methylvalerate) into 2-oxo-3-methylpentanoate (2-oxo-3-methylvalerate) and of (2R)-2,3-dihydroxy-3-methylbutanoate (2,3-dihydroxyisovalerate) into 2-oxo-3-methylbutanoate (2-oxoisovalerate), the penultimate precursor to L-isoleucine and L-valine, respectively. This chain is Dihydroxy-acid dehydratase, found in Brucella canis (strain ATCC 23365 / NCTC 10854 / RM-666).